We begin with the raw amino-acid sequence, 63 residues long: Beta-toxin NaTx36 (63 aa).

One can recognise an LCN-type CS-alpha/beta domain in the interval Lys1 to Arg62. 4 disulfides stabilise this stretch: Cys11/Cys61, Cys15/Cys36, Cys22/Cys43, and Cys26/Cys45.

This sequence belongs to the long (4 C-C) scorpion toxin superfamily. Sodium channel inhibitor family. Beta subfamily. Expressed by the venom gland.

The protein resides in the secreted. Beta toxins bind sodium channels (Nav) and shift the voltage of activation towards more negative potentials thereby affecting sodium channel activation and promoting spontaneous and repetitive firing. Only when tested on grasshopper mouse channels, this toxin inhibits Nav1.8/SCN10A sodium currents in a concentration and voltage-dependent manner (IC(50)=680 nM). This toxin hyperpolarizes the voltage dependence of Nav1.8/SCN10A activation, as well as steady-state fast inactivation and slow inactivation. In contrast to most beta scorpion toxins, this toxin inhibits grasshopper mouse Nav1.8/SCN10A currents through modulation of the domain I S4 voltage sensor, and the domain II second S5-S6 extracellular pore loop. The chain is Beta-toxin NaTx36 from Centruroides sculpturatus (Arizona bark scorpion).